The following is a 144-amino-acid chain: Large ribosomal subunit protein uL16 (144 aa).

The span at 1–19 (MLLPKRVKYRRQHRPKTTG) shows a compositional bias: basic residues. The tract at residues 1–23 (MLLPKRVKYRRQHRPKTTGRSKG) is disordered.

The protein belongs to the universal ribosomal protein uL16 family. In terms of assembly, part of the 50S ribosomal subunit.

In terms of biological role, binds 23S rRNA and is also seen to make contacts with the A and possibly P site tRNAs. In Staphylococcus haemolyticus (strain JCSC1435), this protein is Large ribosomal subunit protein uL16.